We begin with the raw amino-acid sequence, 257 residues long: Indole-3-glycerol phosphate synthase (257 aa).

The protein belongs to the TrpC family.

The catalysed reaction is 1-(2-carboxyphenylamino)-1-deoxy-D-ribulose 5-phosphate + H(+) = (1S,2R)-1-C-(indol-3-yl)glycerol 3-phosphate + CO2 + H2O. Its pathway is amino-acid biosynthesis; L-tryptophan biosynthesis; L-tryptophan from chorismate: step 4/5. This Halalkalibacterium halodurans (strain ATCC BAA-125 / DSM 18197 / FERM 7344 / JCM 9153 / C-125) (Bacillus halodurans) protein is Indole-3-glycerol phosphate synthase.